Reading from the N-terminus, the 442-residue chain is tRNA modification GTPase MnmE (442 aa).

(6S)-5-formyl-5,6,7,8-tetrahydrofolate-binding residues include Arg-23, Glu-82, and Lys-121. Positions 217–363 (PFKIAIIGET…LVDLLTKYIN (147 aa)) constitute a TrmE-type G domain. Asn-227 provides a ligand contact to K(+). GTP contacts are provided by residues 227-232 (NVGKSS), 246-252 (SNIKGST), and 271-274 (DTAG). Position 231 (Ser-231) interacts with Mg(2+). 3 residues coordinate K(+): Ser-246, Ile-248, and Ser-251. Residue Thr-252 participates in Mg(2+) binding. Lys-442 contacts (6S)-5-formyl-5,6,7,8-tetrahydrofolate.

It belongs to the TRAFAC class TrmE-Era-EngA-EngB-Septin-like GTPase superfamily. TrmE GTPase family. As to quaternary structure, homodimer. Heterotetramer of two MnmE and two MnmG subunits. K(+) serves as cofactor.

Its subcellular location is the cytoplasm. In terms of biological role, exhibits a very high intrinsic GTPase hydrolysis rate. Involved in the addition of a carboxymethylaminomethyl (cmnm) group at the wobble position (U34) of certain tRNAs, forming tRNA-cmnm(5)s(2)U34. This is tRNA modification GTPase MnmE from Mycoplasma genitalium (strain ATCC 33530 / DSM 19775 / NCTC 10195 / G37) (Mycoplasmoides genitalium).